The following is a 330-amino-acid chain: tRNA uridine(34) hydroxylase (330 aa).

The Rhodanese domain occupies 123 to 217 (SDPEVILVDT…YLEEVKQEES (95 aa)). Cysteine 177 serves as the catalytic Cysteine persulfide intermediate.

The protein belongs to the TrhO family.

It carries out the reaction uridine(34) in tRNA + AH2 + O2 = 5-hydroxyuridine(34) in tRNA + A + H2O. Functionally, catalyzes oxygen-dependent 5-hydroxyuridine (ho5U) modification at position 34 in tRNAs. In Shewanella sp. (strain ANA-3), this protein is tRNA uridine(34) hydroxylase.